We begin with the raw amino-acid sequence, 112 residues long: Large ribosomal subunit protein bL17 (112 aa).

It belongs to the bacterial ribosomal protein bL17 family. As to quaternary structure, part of the 50S ribosomal subunit. Contacts protein L32.

The chain is Large ribosomal subunit protein bL17 from Heliobacterium modesticaldum (strain ATCC 51547 / Ice1).